Reading from the N-terminus, the 256-residue chain is MDKLVLGGHEFNSRLLVGTGKYGSNNILPEVIKESGSEIITMALRRVDLDNKQENILTYIPKEMTILPNTSGATNAEEAVRIARISRKMGCGDFIKIEVISDTRYLLPDNEETIKATKILADEGFIVLPYMTPDLYAGRRLIEANAAAVMPLGAPIGSNRGLQMKEMIRIMIDELDIPIIVDAGIGKPSQAMEAMEMGADAVLVNTAIASAGDPVQMARAFKLAVEGGREAYIAKTGNVSEFANASSPLTGFLGNL.

Lys96 serves as the catalytic Schiff-base intermediate with DXP. 1-deoxy-D-xylulose 5-phosphate-binding positions include Gly157, 183–184, and 205–206; these read AG and NT.

The protein belongs to the ThiG family. In terms of assembly, homotetramer. Forms heterodimers with either ThiH or ThiS.

Its subcellular location is the cytoplasm. The enzyme catalyses [ThiS sulfur-carrier protein]-C-terminal-Gly-aminoethanethioate + 2-iminoacetate + 1-deoxy-D-xylulose 5-phosphate = [ThiS sulfur-carrier protein]-C-terminal Gly-Gly + 2-[(2R,5Z)-2-carboxy-4-methylthiazol-5(2H)-ylidene]ethyl phosphate + 2 H2O + H(+). The protein operates within cofactor biosynthesis; thiamine diphosphate biosynthesis. In terms of biological role, catalyzes the rearrangement of 1-deoxy-D-xylulose 5-phosphate (DXP) to produce the thiazole phosphate moiety of thiamine. Sulfur is provided by the thiocarboxylate moiety of the carrier protein ThiS. In vitro, sulfur can be provided by H(2)S. This chain is Thiazole synthase, found in Clostridioides difficile (strain 630) (Peptoclostridium difficile).